The following is a 405-amino-acid chain: uncharacterized protein (405 aa).

Transmembrane regions (helical) follow at residues 19 to 39, 47 to 67, 85 to 105, 129 to 149, 157 to 177, 178 to 198, 224 to 244, 252 to 272, 283 to 303, 309 to 329, 344 to 364, and 366 to 386; these read ILSI…PLAV, VMGF…FATL, IVVF…TAGL, SFAG…LHIG, IVTY…YHWG, GLQA…LLAI, GMAL…ITLF, GAAF…LLFP, VAMI…VATM, IGVL…GVVA, TYTV…GLVM, and WAGV…ALLL.

The protein belongs to the major facilitator superfamily. YhhS family.

The protein resides in the cell inner membrane. This is an uncharacterized protein from Escherichia coli O157:H7.